Consider the following 256-residue polypeptide: tRNA-cytidine(32) 2-sulfurtransferase (256 aa).

Positions 35 to 40 (SGGKDS) match the PP-loop motif motif. [4Fe-4S] cluster contacts are provided by Cys-110, Cys-113, and Cys-201.

The protein belongs to the TtcA family. Homodimer. Requires Mg(2+) as cofactor. [4Fe-4S] cluster is required as a cofactor.

It localises to the cytoplasm. The enzyme catalyses cytidine(32) in tRNA + S-sulfanyl-L-cysteinyl-[cysteine desulfurase] + AH2 + ATP = 2-thiocytidine(32) in tRNA + L-cysteinyl-[cysteine desulfurase] + A + AMP + diphosphate + H(+). It functions in the pathway tRNA modification. In terms of biological role, catalyzes the ATP-dependent 2-thiolation of cytidine in position 32 of tRNA, to form 2-thiocytidine (s(2)C32). The sulfur atoms are provided by the cysteine/cysteine desulfurase (IscS) system. The protein is tRNA-cytidine(32) 2-sulfurtransferase of Coxiella burnetii (strain RSA 493 / Nine Mile phase I).